A 271-amino-acid polypeptide reads, in one-letter code: Cell surface glycoprotein CD200 receptor 2 (271 aa).

The first 23 residues, 1–23 (MSAPRLLISIIIMVSASSSSCMG), serve as a signal peptide directing secretion. The Extracellular segment spans residues 24-239 (GKQMTQNYST…TSGSPALSLL (216 aa)). N-linked (GlcNAc...) asparagine glycans are attached at residues N30, N39, N86, N92, N189, and N217. The Ig-like V-type domain occupies 46–132 (MDINAVLCCP…YRGIVVTPDG (87 aa)). The region spanning 133–221 (NFHRGYHLQV…SHLTGNKSLS (89 aa)) is the Ig-like C2-type domain. Cysteines 160 and 209 form a disulfide. The chain crosses the membrane as a helical span at residues 240–260 (IILYVKLSLFVVILVTTGFVF). Topologically, residues 261-271 (FQRINHVRKVL) are cytoplasmic.

This sequence belongs to the CD200R family.

The protein localises to the membrane. May be a receptor for the CD200/OX2 cell surface glycoprotein. This Homo sapiens (Human) protein is Cell surface glycoprotein CD200 receptor 2 (CD200R1L).